The following is a 165-amino-acid chain: Protein-export protein SecB (165 aa).

It belongs to the SecB family. As to quaternary structure, homotetramer, a dimer of dimers. One homotetramer interacts with 1 SecA dimer.

It localises to the cytoplasm. Functionally, one of the proteins required for the normal export of preproteins out of the cell cytoplasm. It is a molecular chaperone that binds to a subset of precursor proteins, maintaining them in a translocation-competent state. It also specifically binds to its receptor SecA. In Colwellia psychrerythraea (strain 34H / ATCC BAA-681) (Vibrio psychroerythus), this protein is Protein-export protein SecB.